The sequence spans 271 residues: GPN-loop GTPase 3 (271 aa).

13-18 (GAGKST) serves as a coordination point for GTP. The Gly-Pro-Asn (GPN)-loop; involved in dimer interface motif lies at 70-72 (GPN). GTP is bound at residue 173 to 176 (SKLD).

It belongs to the GPN-loop GTPase family. Heterodimers with GPN1 or GPN2. Binds to RNA polymerase II (RNAPII).

In terms of biological role, small GTPase required for proper nuclear import of RNA polymerase II and III (RNAPII and RNAPIII). May act at an RNAP assembly step prior to nuclear import. The protein is GPN-loop GTPase 3 of Candida glabrata (strain ATCC 2001 / BCRC 20586 / JCM 3761 / NBRC 0622 / NRRL Y-65 / CBS 138) (Yeast).